A 195-amino-acid polypeptide reads, in one-letter code: Imidazoleglycerol-phosphate dehydratase (195 aa).

This sequence belongs to the imidazoleglycerol-phosphate dehydratase family.

It localises to the cytoplasm. It catalyses the reaction D-erythro-1-(imidazol-4-yl)glycerol 3-phosphate = 3-(imidazol-4-yl)-2-oxopropyl phosphate + H2O. It functions in the pathway amino-acid biosynthesis; L-histidine biosynthesis; L-histidine from 5-phospho-alpha-D-ribose 1-diphosphate: step 6/9. This is Imidazoleglycerol-phosphate dehydratase from Aminomonas aminovorus.